Here is a 694-residue protein sequence, read N- to C-terminus: Long-chain-fatty-acid--CoA ligase 3 (694 aa).

Residues 1–25 are disordered; that stretch reads MSEQHSVAVGKAANEHETAPRRNVR. Serine 2 carries the post-translational modification N-acetylserine. 269–280 is a binding site for ATP; the sequence is YTSGSISAPKGV. An FACS motif is present at residues 527–576; that stretch reads DGWFRTGDIVEWTPKGQLKIIDRRKNLVKTLNGEYIALEKLESVYRSNSY.

It belongs to the ATP-dependent AMP-binding enzyme family. In terms of assembly, interacts with FRK1. Requires Mg(2+) as cofactor.

The protein resides in the cell membrane. It carries out the reaction a long-chain fatty acid + ATP + CoA = a long-chain fatty acyl-CoA + AMP + diphosphate. The catalysed reaction is (9Z)-octadecenoate + ATP + CoA = (9Z)-octadecenoyl-CoA + AMP + diphosphate. It catalyses the reaction hexadecanoate + ATP + CoA = hexadecanoyl-CoA + AMP + diphosphate. The enzyme catalyses (9Z)-hexadecenoate + ATP + CoA = (9Z)-hexadecenoyl-CoA + AMP + diphosphate. It carries out the reaction (9Z)-tetradecenoate + ATP + CoA = (9Z)-tetradecenoyl-CoA + AMP + diphosphate. The catalysed reaction is (9Z,12Z)-octadecadienoate + ATP + CoA = (9Z,12Z)-octadecadienoyl-CoA + AMP + diphosphate. Activates endogenous long-chain fatty acids (LCFA) by esterification of the fatty acids into metabolically active CoA-thioesters for subsequent degradation or incorporation into phospholipids. Acts preferentially on C16 and C18 fatty acids with a cis-double bond at C-9-C-10. In Saccharomyces cerevisiae (strain ATCC 204508 / S288c) (Baker's yeast), this protein is Long-chain-fatty-acid--CoA ligase 3 (FAA3).